A 67-amino-acid chain; its full sequence is uncharacterized protein (67 aa).

This sequence to E.coli YbdD.

This is an uncharacterized protein from Escherichia coli O157:H7.